Reading from the N-terminus, the 90-residue chain is DNA-directed RNA polymerase subunit omega (90 aa).

The tract at residues 69-90 (RQEQQEQDAAELAAVSSITHNR) is disordered.

The protein belongs to the RNA polymerase subunit omega family. As to quaternary structure, the RNAP catalytic core consists of 2 alpha, 1 beta, 1 beta' and 1 omega subunit. When a sigma factor is associated with the core the holoenzyme is formed, which can initiate transcription.

It catalyses the reaction RNA(n) + a ribonucleoside 5'-triphosphate = RNA(n+1) + diphosphate. In terms of biological role, promotes RNA polymerase assembly. Latches the N- and C-terminal regions of the beta' subunit thereby facilitating its interaction with the beta and alpha subunits. The protein is DNA-directed RNA polymerase subunit omega of Aliivibrio fischeri (strain ATCC 700601 / ES114) (Vibrio fischeri).